We begin with the raw amino-acid sequence, 301 residues long: Pyridoxal 5'-phosphate synthase subunit PdxS (301 aa).

D31 is a D-ribose 5-phosphate binding site. The active-site Schiff-base intermediate with D-ribose 5-phosphate is the K88. G160 is a D-ribose 5-phosphate binding site. Residue R172 participates in D-glyceraldehyde 3-phosphate binding. D-ribose 5-phosphate is bound by residues G221 and 242–243 (GS). Residues 273 to 301 (EIAKSPGKGMKGQANETLPEEEKLQDRGI) form a disordered region. Residues 292 to 301 (EEEKLQDRGI) are compositionally biased toward basic and acidic residues.

This sequence belongs to the PdxS/SNZ family. In the presence of PdxT, forms a dodecamer of heterodimers.

The catalysed reaction is aldehydo-D-ribose 5-phosphate + D-glyceraldehyde 3-phosphate + L-glutamine = pyridoxal 5'-phosphate + L-glutamate + phosphate + 3 H2O + H(+). It participates in cofactor biosynthesis; pyridoxal 5'-phosphate biosynthesis. Functionally, catalyzes the formation of pyridoxal 5'-phosphate from ribose 5-phosphate (RBP), glyceraldehyde 3-phosphate (G3P) and ammonia. The ammonia is provided by the PdxT subunit. Can also use ribulose 5-phosphate and dihydroxyacetone phosphate as substrates, resulting from enzyme-catalyzed isomerization of RBP and G3P, respectively. This chain is Pyridoxal 5'-phosphate synthase subunit PdxS, found in Natronomonas pharaonis (strain ATCC 35678 / DSM 2160 / CIP 103997 / JCM 8858 / NBRC 14720 / NCIMB 2260 / Gabara) (Halobacterium pharaonis).